The following is a 396-amino-acid chain: Putative N(4)-(beta-N-acetylglucosaminyl)-L-asparaginase GG24090 (396 aa).

Positions 1–23 are cleaved as a signal peptide; it reads MKRHLGTCLWVLCLASTAFSSLA. Disulfide bonds link C100/C105 and C199/C215. The active-site Nucleophile is the T246. Substrate-binding positions include 274–277 and 297–300; these read RVGD and TGDG. A disulfide bridge connects residues C357 and C384.

Belongs to the Ntn-hydrolase family. In terms of assembly, heterotetramer of two alpha and two beta chains arranged as a dimer of alpha/beta heterodimers. Cleaved into an alpha and beta chain by autocatalysis; this activates the enzyme. The N-terminal residue of the beta subunit is responsible for the nucleophile hydrolase activity.

It carries out the reaction N(4)-(beta-N-acetyl-D-glucosaminyl)-L-asparagine + H2O = N-acetyl-beta-D-glucosaminylamine + L-aspartate + H(+). Functionally, cleaves the GlcNAc-Asn bond which joins oligosaccharides to the peptide of asparagine-linked glycoproteins. In Drosophila erecta (Fruit fly), this protein is Putative N(4)-(beta-N-acetylglucosaminyl)-L-asparaginase GG24090.